A 337-amino-acid polypeptide reads, in one-letter code: Large ribosomal subunit protein uL3 (337 aa).

The disordered stretch occupies residues 1 to 20 (MASIHRPKRGSLAFSPRKRA).

It belongs to the universal ribosomal protein uL3 family. As to quaternary structure, part of the 50S ribosomal subunit. Forms a cluster with proteins L14 and L24e.

Its function is as follows. One of the primary rRNA binding proteins, it binds directly near the 3'-end of the 23S rRNA, where it nucleates assembly of the 50S subunit. In Methanosarcina acetivorans (strain ATCC 35395 / DSM 2834 / JCM 12185 / C2A), this protein is Large ribosomal subunit protein uL3.